The chain runs to 382 residues: Enoyl-[acyl-carrier-protein] reductase, mitochondrial (382 aa).

Residues 1–17 constitute a mitochondrion transit peptide; the sequence is MSSFLSKRFLSFSQRAM. Tyr-77 (proton donor) is an active-site residue. Residues Asn-159, 187–190, 210–212, 285–288, 310–312, and Lys-375 each bind NADP(+); these read TSSV, RDR, YGGM, and FWV.

It belongs to the zinc-containing alcohol dehydrogenase family. Quinone oxidoreductase subfamily. Homodimer.

The protein resides in the mitochondrion matrix. The catalysed reaction is a 2,3-saturated acyl-[ACP] + NADP(+) = a (2E)-enoyl-[ACP] + NADPH + H(+). Its function is as follows. Catalyzes the NADPH-dependent reduction of trans-2-enoyl thioesters in mitochondrial fatty acid synthesis (fatty acid synthesis type II). Fatty acid chain elongation in mitochondria uses acyl carrier protein (ACP) as an acyl group carrier, but the enzyme accepts both ACP and CoA thioesters as substrates in vitro. Required for respiration and the maintenance of the mitochondrial compartment. The chain is Enoyl-[acyl-carrier-protein] reductase, mitochondrial (ETR1) from Kluyveromyces lactis (strain ATCC 8585 / CBS 2359 / DSM 70799 / NBRC 1267 / NRRL Y-1140 / WM37) (Yeast).